A 116-amino-acid chain; its full sequence is Large ribosomal subunit protein uL18 (116 aa).

It belongs to the universal ribosomal protein uL18 family. Part of the 50S ribosomal subunit; part of the 5S rRNA/L5/L18/L25 subcomplex. Contacts the 5S and 23S rRNAs.

Its function is as follows. This is one of the proteins that bind and probably mediate the attachment of the 5S RNA into the large ribosomal subunit, where it forms part of the central protuberance. This is Large ribosomal subunit protein uL18 from Psychromonas ingrahamii (strain DSM 17664 / CCUG 51855 / 37).